A 189-amino-acid polypeptide reads, in one-letter code: Transcription factor FapR (189 aa).

This sequence belongs to the FapR family.

Transcriptional factor involved in regulation of membrane lipid biosynthesis by repressing genes involved in fatty acid and phospholipid metabolism. The protein is Transcription factor FapR of Listeria monocytogenes serotype 4b (strain CLIP80459).